The sequence spans 412 residues: Divalent metal cation transporter MntH (412 aa).

The next 11 membrane-spanning stretches (helical) occupy residues 19-39, 46-66, 94-114, 122-142, 155-175, 196-216, 241-261, 290-310, 329-349, 350-370, and 389-409; these read FALMGPAFIAAIGYIDPGNFA, ASFGYKLLWVVVWANLMAMLI, VWFYWVQAEIIAMATDLAEFI, LILGVSLLQGAVLTGIATFLI, LVIGGLLLFVAAAYIVELVFS, AVFLAAGVLGATIMPHVIYLH, IAMTIAGFVNLAMMATAAAAF, IFGLSLVAAGLSSTVVGTLAG, SVTMMPSFIVILMGLDPTRIL, VMSQVLLSFGIALALVPLLIF, and IGWMIVVLVVALNLWLLIGTL.

The protein belongs to the NRAMP family.

The protein localises to the cell inner membrane. In terms of biological role, h(+)-stimulated, divalent metal cation uptake system. The chain is Divalent metal cation transporter MntH from Enterobacter sp. (strain 638).